Consider the following 632-residue polypeptide: Asparagine synthetase [glutamine-hydrolyzing] 1 (632 aa).

Cys-2 functions as the For GATase activity in the catalytic mechanism. A Glutamine amidotransferase type-2 domain is found at Cys-2–Asp-214. L-glutamine is bound by residues Arg-52–Ile-56, Asn-77–Glu-79, and Asp-102. ATP contacts are provided by residues Val-288 and Ser-361–Gly-362.

This sequence belongs to the asparagine synthetase family.

It carries out the reaction L-aspartate + L-glutamine + ATP + H2O = L-asparagine + L-glutamate + AMP + diphosphate + H(+). It participates in amino-acid biosynthesis; L-asparagine biosynthesis; L-asparagine from L-aspartate (L-Gln route): step 1/1. In terms of biological role, main asparagine synthetase in vegetative cells. This is Asparagine synthetase [glutamine-hydrolyzing] 1 (asnB) from Bacillus subtilis (strain 168).